The primary structure comprises 220 residues: Ribosomal RNA large subunit methyltransferase E (220 aa).

Positions 1 to 10 (MSRSGKDPGK) are enriched in basic and acidic residues. A disordered region spans residues 1-24 (MSRSGKDPGKRVKTARKRSASSTR). S-adenosyl-L-methionine is bound by residues G75, W77, D94, D110, and D134. K174 acts as the Proton acceptor in catalysis.

It belongs to the class I-like SAM-binding methyltransferase superfamily. RNA methyltransferase RlmE family.

The protein resides in the cytoplasm. The catalysed reaction is uridine(2552) in 23S rRNA + S-adenosyl-L-methionine = 2'-O-methyluridine(2552) in 23S rRNA + S-adenosyl-L-homocysteine + H(+). In terms of biological role, specifically methylates the uridine in position 2552 of 23S rRNA at the 2'-O position of the ribose in the fully assembled 50S ribosomal subunit. This Erythrobacter litoralis (strain HTCC2594) protein is Ribosomal RNA large subunit methyltransferase E.